Consider the following 362-residue polypeptide: Alanine racemase (362 aa).

Lys-35 serves as the catalytic Proton acceptor; specific for D-alanine. The residue at position 35 (Lys-35) is an N6-(pyridoxal phosphate)lysine. Arg-130 serves as a coordination point for substrate. Catalysis depends on Tyr-257, which acts as the Proton acceptor; specific for L-alanine. Met-305 is a binding site for substrate.

This sequence belongs to the alanine racemase family. Pyridoxal 5'-phosphate serves as cofactor.

It catalyses the reaction L-alanine = D-alanine. Its pathway is amino-acid biosynthesis; D-alanine biosynthesis; D-alanine from L-alanine: step 1/1. Catalyzes the interconversion of L-alanine and D-alanine. May also act on other amino acids. The sequence is that of Alanine racemase (alr) from Nitrosomonas europaea (strain ATCC 19718 / CIP 103999 / KCTC 2705 / NBRC 14298).